Reading from the N-terminus, the 268-residue chain is 3-methyl-2-oxobutanoate hydroxymethyltransferase (268 aa).

2 residues coordinate Mg(2+): Asp44 and Asp83. Residues 44–45 (DS), Asp83, and Lys113 contribute to the 3-methyl-2-oxobutanoate site. Glu115 lines the Mg(2+) pocket. Glu182 (proton acceptor) is an active-site residue.

Belongs to the PanB family. In terms of assembly, homodecamer; pentamer of dimers. The cofactor is Mg(2+).

Its subcellular location is the cytoplasm. It carries out the reaction 3-methyl-2-oxobutanoate + (6R)-5,10-methylene-5,6,7,8-tetrahydrofolate + H2O = 2-dehydropantoate + (6S)-5,6,7,8-tetrahydrofolate. Its pathway is cofactor biosynthesis; (R)-pantothenate biosynthesis; (R)-pantoate from 3-methyl-2-oxobutanoate: step 1/2. Catalyzes the reversible reaction in which hydroxymethyl group from 5,10-methylenetetrahydrofolate is transferred onto alpha-ketoisovalerate to form ketopantoate. This chain is 3-methyl-2-oxobutanoate hydroxymethyltransferase, found in Synechococcus elongatus (strain ATCC 33912 / PCC 7942 / FACHB-805) (Anacystis nidulans R2).